Consider the following 159-residue polypeptide: NADH dehydrogenase [ubiquinone] 1 beta subcomplex subunit 10 (159 aa).

The protein belongs to the complex I NDUFB10 subunit family. Complex I is composed of 45 different subunits.

Its subcellular location is the mitochondrion inner membrane. In terms of biological role, accessory subunit of the mitochondrial membrane respiratory chain NADH dehydrogenase (Complex I), that is believed not to be involved in catalysis. Complex I functions in the transfer of electrons from NADH to the respiratory chain. The immediate electron acceptor for the enzyme is believed to be ubiquinone. This chain is NADH dehydrogenase [ubiquinone] 1 beta subcomplex subunit 10, found in Bombyx mori (Silk moth).